Reading from the N-terminus, the 388-residue chain is Phosphopentomutase (388 aa).

Residues Asp10, Asp282, His287, Asp323, His324, and His335 each coordinate Mn(2+).

It belongs to the phosphopentomutase family. It depends on Mn(2+) as a cofactor.

It is found in the cytoplasm. The enzyme catalyses 2-deoxy-alpha-D-ribose 1-phosphate = 2-deoxy-D-ribose 5-phosphate. It catalyses the reaction alpha-D-ribose 1-phosphate = D-ribose 5-phosphate. Its pathway is carbohydrate degradation; 2-deoxy-D-ribose 1-phosphate degradation; D-glyceraldehyde 3-phosphate and acetaldehyde from 2-deoxy-alpha-D-ribose 1-phosphate: step 1/2. Its function is as follows. Isomerase that catalyzes the conversion of deoxy-ribose 1-phosphate (dRib-1-P) and ribose 1-phosphate (Rib-1-P) to deoxy-ribose 5-phosphate (dRib-5-P) and ribose 5-phosphate (Rib-5-P), respectively. This is Phosphopentomutase from Desulfitobacterium hafniense (strain DSM 10664 / DCB-2).